The following is a 37-amino-acid chain: Potassium channel toxin alpha-KTx 2.14 (37 aa).

Disulfide bonds link Cys7-Cys28, Cys13-Cys33, and Cys17-Cys35.

The protein belongs to the short scorpion toxin superfamily. Potassium channel inhibitor family. Alpha-KTx 02 subfamily. Expressed by the venom gland.

The protein resides in the secreted. In terms of biological role, reversibly blocks hKv1.1/KCNA1 (50% inhibition of current at 1 uM). Seems not to be voltage-dependent. The chain is Potassium channel toxin alpha-KTx 2.14 from Heteroctenus garridoi (Cuban scorpion).